A 238-amino-acid chain; its full sequence is Phosphoribosylaminoimidazole-succinocarboxamide synthase (238 aa).

Belongs to the SAICAR synthetase family.

The enzyme catalyses 5-amino-1-(5-phospho-D-ribosyl)imidazole-4-carboxylate + L-aspartate + ATP = (2S)-2-[5-amino-1-(5-phospho-beta-D-ribosyl)imidazole-4-carboxamido]succinate + ADP + phosphate + 2 H(+). Its pathway is purine metabolism; IMP biosynthesis via de novo pathway; 5-amino-1-(5-phospho-D-ribosyl)imidazole-4-carboxamide from 5-amino-1-(5-phospho-D-ribosyl)imidazole-4-carboxylate: step 1/2. This Desulfitobacterium hafniense (strain Y51) protein is Phosphoribosylaminoimidazole-succinocarboxamide synthase.